The primary structure comprises 416 residues: CCA-adding enzyme (416 aa).

2 residues coordinate ATP: serine 42 and lysine 45. Serine 42 and lysine 45 together coordinate CTP. Residues aspartate 54, aspartate 56, and aspartate 107 each coordinate Mg(2+). 3 residues coordinate ATP: histidine 130, lysine 150, and tyrosine 159. Positions 130, 150, and 159 each coordinate CTP.

It belongs to the tRNA nucleotidyltransferase/poly(A) polymerase family. Archaeal CCA-adding enzyme subfamily. Homodimer. The cofactor is Mg(2+).

It carries out the reaction a tRNA precursor + 2 CTP + ATP = a tRNA with a 3' CCA end + 3 diphosphate. The enzyme catalyses a tRNA with a 3' CCA end + 2 CTP + ATP = a tRNA with a 3' CCACCA end + 3 diphosphate. In terms of biological role, catalyzes the addition and repair of the essential 3'-terminal CCA sequence in tRNAs without using a nucleic acid template. Adds these three nucleotides in the order of C, C, and A to the tRNA nucleotide-73, using CTP and ATP as substrates and producing inorganic pyrophosphate. tRNA 3'-terminal CCA addition is required both for tRNA processing and repair. Also involved in tRNA surveillance by mediating tandem CCA addition to generate a CCACCA at the 3' terminus of unstable tRNAs. While stable tRNAs receive only 3'-terminal CCA, unstable tRNAs are marked with CCACCA and rapidly degraded. The polypeptide is CCA-adding enzyme (Sulfolobus acidocaldarius (strain ATCC 33909 / DSM 639 / JCM 8929 / NBRC 15157 / NCIMB 11770)).